A 227-amino-acid polypeptide reads, in one-letter code: Ribosomal RNA large subunit methyltransferase E (227 aa).

Gly-78, Trp-80, Asp-103, Asp-119, and Asp-143 together coordinate S-adenosyl-L-methionine. Catalysis depends on Lys-183, which acts as the Proton acceptor.

It belongs to the class I-like SAM-binding methyltransferase superfamily. RNA methyltransferase RlmE family.

The protein resides in the cytoplasm. The enzyme catalyses uridine(2552) in 23S rRNA + S-adenosyl-L-methionine = 2'-O-methyluridine(2552) in 23S rRNA + S-adenosyl-L-homocysteine + H(+). In terms of biological role, specifically methylates the uridine in position 2552 of 23S rRNA at the 2'-O position of the ribose in the fully assembled 50S ribosomal subunit. In Rickettsia conorii (strain ATCC VR-613 / Malish 7), this protein is Ribosomal RNA large subunit methyltransferase E.